Consider the following 727-residue polypeptide: Sodium-dependent neutral amino acid transporter SLC6A17 (727 aa).

Residues 1-68 are Cytoplasmic-facing; that stretch reads MPKNSKVTQR…DRPAWNSKLQ (68 aa). A phosphoserine mark is found at Ser13 and Ser20. A helical transmembrane segment spans residues 69 to 89; the sequence is YILAQIGFSVGLGNIWRFPYL. Over 90–96 the chain is Extracellular; the sequence is CQKNGGG. Residues 97 to 116 form a helical membrane-spanning segment; the sequence is AYLVPYLVLLIIIGIPLFFL. Residues 117-140 lie on the Cytoplasmic side of the membrane; that stretch reads ELAVGQRIRRGSIGVWHYVCPRLG. The helical transmembrane segment at 141–161 threads the bilayer; it reads GIGFSSCIVCLFVGLYYNVII. Over 162–224 the chain is Extracellular; the sequence is GWSVFYFFKS…NSISESGGLN (63 aa). Residue Asn186 is glycosylated (N-linked (GlcNAc...) asparagine). The helical transmembrane segment at 225 to 243 threads the bilayer; it reads WKMTVCLLVAWSIVGMAVV. The Cytoplasmic portion of the chain corresponds to 244–251; that stretch reads KGIQSSGK. A helical membrane pass occupies residues 252–269; it reads VMYFSSLFPYVVLACFLV. Residues 270–304 lie on the Extracellular side of the membrane; sequence RGLLLRGAVDGILHMFTPKLDKMLDPQVWREAATQ. The helical transmembrane segment at 305 to 322 threads the bilayer; that stretch reads VFFALGLGFGGVIAFSSY. Residues 323–333 are Cytoplasmic-facing; the sequence is NKQDNNCHFDA. The chain crosses the membrane as a helical span at residues 334-355; that stretch reads ALVSFINFFTSVLATLVVFAVL. Residues 356–451 lie on the Extracellular side of the membrane; the sequence is GFKANIMNEK…FIAFTEAMTH (96 aa). Tyr377 is subject to Phosphotyrosine. The N-linked (GlcNAc...) asparagine glycan is linked to Asn393. The chain crosses the membrane as a helical span at residues 452–471; sequence FPASPFWSVMFFLMLINLGL. The Cytoplasmic segment spans residues 472 to 494; it reads GSMIGTMAGITTPIIDTFKVPKE. A helical transmembrane segment spans residues 495 to 513; it reads MFTVGCCVFAFFVGLLFVQ. Residues 514-528 lie on the Extracellular side of the membrane; that stretch reads RSGNYFVTMFDDYSA. A helical transmembrane segment spans residues 529-549; the sequence is TLPLTVIVILENIAVAWIYGT. The Cytoplasmic portion of the chain corresponds to 550 to 569; that stretch reads KKFMQELTEMLGFRPYRFYF. Residues 570–591 traverse the membrane as a helical segment; it reads YMWKFVSPLCMAVLTTASIIQL. The Extracellular segment spans residues 592 to 618; the sequence is GVSPPGYSAWIKEEAAERYLYFPNWAM. A helical membrane pass occupies residues 619–641; sequence ALLITLIAVATLPIPVVFILRHF. Over 642 to 727 the chain is Cytoplasmic; it reads HLLSDGSNTL…LLASTPESEL (86 aa). Residues Ser665 and Ser701 each carry the phosphoserine modification. A disordered region spans residues 680-727; it reads VPSEAPSPMPTHRSYLGPGSTSPLESSSHPNGRYGSGYLLASTPESEL. Positions 698 to 709 are enriched in polar residues; sequence GSTSPLESSSHP.

The protein belongs to the sodium:neurotransmitter symporter (SNF) (TC 2.A.22) family. In terms of tissue distribution, found exclusively in the central nervous system and is more abundant in the cerebellum and the cerebral cortex. Expressed in PC-12 cell line.

It localises to the cytoplasmic vesicle. Its subcellular location is the secretory vesicle. It is found in the synaptic vesicle membrane. The protein localises to the postsynapse. The protein resides in the presynapse. It catalyses the reaction L-proline(in) + Na(+)(in) = L-proline(out) + Na(+)(out). The catalysed reaction is L-leucine(in) + Na(+)(in) = L-leucine(out) + Na(+)(out). The enzyme catalyses glycine(in) + Na(+)(in) = glycine(out) + Na(+)(out). It carries out the reaction L-alanine(in) + Na(+)(in) = L-alanine(out) + Na(+)(out). It catalyses the reaction L-glutamine(in) + Na(+)(in) = L-glutamine(out) + Na(+)(out). Synaptic vesicle transporter with apparent selectivity for neutral amino acids. The transport is sodium-coupled but chloride-independent, likely driven by the proton electrochemical gradient generated by vacuolar H(+)-ATPase in an overall electrogenic mechanism. May contribute to the synaptic uptake of neurotransmitter precursors in a process coupled in part to vesicle exocytosis. In Rattus norvegicus (Rat), this protein is Sodium-dependent neutral amino acid transporter SLC6A17.